The primary structure comprises 359 residues: Mitochondrial calcium uniporter regulator 1 (359 aa).

The Mitochondrial intermembrane portion of the chain corresponds to 1 to 68; sequence MDCGSVGGQR…ARGGVSRASP (68 aa). Residues 69–85 form a helical membrane-spanning segment; the sequence is LLLLLLVPSPRLAAAAP. At 86–338 the chain is on the mitochondrial matrix side; it reads RRQLGDWERS…LESHKLDNIK (253 aa). Residues 235-310 adopt a coiled-coil conformation; it reads EKSEFSALRA…VALHAQQDRA (76 aa). The chain crosses the membrane as a helical span at residues 339 to 358; it reads YLAGSIFTCLTVALGFYRLW. A topological domain (mitochondrial intermembrane) is located at residue isoleucine 359.

The protein belongs to the CCDC90 family. In terms of assembly, interacts (via coiled coil regions) with MCU; the interaction is direct. Interacts with SMDT1/EMRE; the interaction is direct. Interacts with PPIF. As to expression, ubiquitously expressed.

It is found in the mitochondrion inner membrane. In terms of biological role, key regulator of mitochondrial calcium uniporter (MCU) required for calcium entry into mitochondrion. Plays a direct role in uniporter-mediated calcium uptake via a direct interaction with MCU. Probably involved in the assembly of the membrane components of the uniporter complex (uniplex). The protein is Mitochondrial calcium uniporter regulator 1 of Homo sapiens (Human).